Reading from the N-terminus, the 204-residue chain is Paraneoplastic antigen-like protein 8C (204 aa).

The tract at residues 135–204 (PPATGPRELP…RRHHASDKKL (70 aa)) is disordered. The span at 182-204 (VGKRGKRKNKKNRRRHHASDKKL) shows a compositional bias: basic residues.

The protein belongs to the PNMA family.

This chain is Paraneoplastic antigen-like protein 8C, found in Homo sapiens (Human).